A 56-amino-acid polypeptide reads, in one-letter code: Ferredoxin (56 aa).

4Fe-4S ferredoxin-type domains are found at residues 2–29 (AYVI…AGDD) and 29–56 (DKYV…PQPE). Residues C9, C12, C15, C19, C38, C41, C44, and C48 each coordinate [4Fe-4S] cluster.

[4Fe-4S] cluster is required as a cofactor.

Functionally, ferredoxins are iron-sulfur proteins that transfer electrons in a wide variety of metabolic reactions. In Acetoanaerobium sticklandii (strain ATCC 12662 / DSM 519 / JCM 1433 / CCUG 9281 / NCIMB 10654 / HF) (Clostridium sticklandii), this protein is Ferredoxin.